The following is a 237-amino-acid chain: Insulin-like growth factor-binding protein 4 (237 aa).

The 81-residue stretch at 2 to 82 folds into the IGFBP N-terminal domain; sequence EAIHCPPCSE…VHGQGVCMEL (81 aa). 6 disulfides stabilise this stretch: Cys-6/Cys-32, Cys-9/Cys-34, Cys-17/Cys-35, Cys-23/Cys-38, Cys-46/Cys-59, and Cys-53/Cys-79. N-linked (GlcNAc...) asparagine glycosylation is present at Asn-104. 4 disulfide bridges follow: Cys-110–Cys-117, Cys-153–Cys-183, Cys-194–Cys-205, and Cys-207–Cys-228. One can recognise a Thyroglobulin type-1 domain in the interval 150 to 228; sequence QGSCQSELHR…GLEPKGELDC (79 aa). Ser-234 bears the Phosphoserine mark.

As to quaternary structure, binds IGF2 more than IGF1. In terms of processing, there are two different molecular mass variants (29 kDa and 24 kDa forms). The 29 kDa form was shown to be N-glycosylated. In terms of tissue distribution, detected in adult ewe, liver &gt; kidney &gt; lung &gt;&gt; heart and also in several fetal tissues.

The protein resides in the secreted. Its function is as follows. IGF-binding proteins prolong the half-life of the IGFs and have been shown to either inhibit or stimulate the growth promoting effects of the IGFs on cell culture. They alter the interaction of IGFs with their cell surface receptors. The sequence is that of Insulin-like growth factor-binding protein 4 (IGFBP4) from Ovis aries (Sheep).